Here is a 146-residue protein sequence, read N- to C-terminus: Hemoglobin subunit beta (146 aa).

Valine 1 carries the post-translational modification N-acetylvaline. The Globin domain occupies 2–146; the sequence is HLSDGEKNAI…VANALAHKYH (145 aa). At serine 44 the chain carries Phosphoserine. N6-acetyllysine is present on lysine 59. Residue histidine 63 participates in heme b binding. Residue lysine 82 is modified to N6-acetyllysine. Histidine 92 lines the heme b pocket. The residue at position 93 (cysteine 93) is an S-nitrosocysteine. N6-acetyllysine is present on lysine 144.

This sequence belongs to the globin family. In terms of assembly, heterotetramer of two alpha chains and two beta chains. As to expression, red blood cells.

Functionally, involved in oxygen transport from the lung to the various peripheral tissues. This chain is Hemoglobin subunit beta (HBB), found in Spermophilus citellus (European ground squirrel).